Reading from the N-terminus, the 325-residue chain is LIM and senescent cell antigen-like-containing domain protein 1 (325 aa).

A2 carries the N-acetylalanine modification. 5 LIM zinc-binding domains span residues C10 to D62, C71 to C121, C135 to C184, C193 to H243, and C252 to C303.

As to quaternary structure, component of the heterotrimeric IPP (ILK-PINCH-PARVIN) complex composed of ILK, LIMS1/PINCH and PARVA; the complex binds to F-actin via the C-terminal tail of LIMS1 and the N-terminal region of PARVA, promoting F-actin filament bundling. Formation of the IPP complex is dependent on protein kinase C and precedes integrin-mediated cell adhesion and spreading. Competes with LIMS2 for interaction with ILK. Interacts (via LIM zinc-binding 5) with TGFB1I1. Interacts with SH3/SH2 adapter NCK2, thereby linking the complex to cell surface receptors. Expressed in most tissues except in the brain.

The protein localises to the cell junction. The protein resides in the focal adhesion. It is found in the cell membrane. In terms of biological role, within the IPP (ILK-PINCH-PARVIN) complex, binds to F-actin, promoting F-actin bundling, a process required to generate force for actin cytoskeleton reorganization and subsequent dynamic cell adhesion events such as cell spreading and migration. The sequence is that of LIM and senescent cell antigen-like-containing domain protein 1 (LIMS1) from Homo sapiens (Human).